The sequence spans 349 residues: Short chain dehydrogenase/reductase dpfgH (349 aa).

A helical membrane pass occupies residues 9 to 31; that stretch reads LCIRVVDSLYGSFLYLPLAILFL. NADP(+) is bound by residues Ile65, Arg89, and Asp115. Asn118 is a glycosylation site (N-linked (GlcNAc...) asparagine). 2 residues coordinate NADP(+): Asn142 and Lys164. Catalysis depends on proton donor residues Ser191 and Ser192. Residues Tyr223 and Lys227 each coordinate NADP(+). The active-site Proton acceptor is the Tyr223. Residue Lys227 is the Lowers pKa of active site Tyr of the active site. Asn334 carries an N-linked (GlcNAc...) asparagine glycan.

It belongs to the short-chain dehydrogenases/reductases (SDR) family.

The protein localises to the membrane. The protein operates within secondary metabolite biosynthesis; terpenoid biosynthesis. Its function is as follows. Short chain dehydrogenase/reductase; part of the gene cluster that mediates the biosynthesis of diterpenoid pyrones. The first step of the pathway is the synthesis of the alpha-pyrone moiety by the polyketide synthase dpfgA via condensation of one acetyl-CoA starter unit with 3 malonyl-CoA units and 2 methylations. The alpha-pyrone is then combined with geranylgeranyl pyrophosphate (GGPP) formed by the GGPP synthase dpfgD through the action of the prenyltransferase dpfgC to yield a linear alpha-pyrone diterpenoid. Subsequent steps in the diterpenoid pyrone biosynthetic pathway involve the decalin core formation, which is initiated by the epoxidation of the C10-C11 olefin by the FAD-dependent oxidoreductase dpfgE, and is followed by a cyclization cascade catalyzed by the terpene cyclase dpfgB. The short chain dehydrogenase/reductase dpfgG then oxidizes the 8S hydroxy group to a ketone and the short chain dehydrogenase/reductase dpfgH reduces the ketone to the 8R hydroxy group to yield higginsianin B. Higginsianin B is further methylated by the methyltransferase dpfgI to produce the intermediate named FDDP B. The cytochrome P450 monooxygenase dfgpJ then catalyzes a three-step oxidation at C-27 to generate a carboxylic acid as well as C-26 hydroxylation. Finally, methyltransferase dpfgK methylates the carboxylic acid generated by dpfgJ, yielding the final diterpenoid pyrones from the pathway which were named FDDP D and FDDP E. This Gibberella zeae (strain ATCC MYA-4620 / CBS 123657 / FGSC 9075 / NRRL 31084 / PH-1) (Wheat head blight fungus) protein is Short chain dehydrogenase/reductase dpfgH.